The sequence spans 525 residues: Glutamate--cysteine ligase (525 aa).

The protein belongs to the glutamate--cysteine ligase type 1 family. Type 1 subfamily.

It catalyses the reaction L-cysteine + L-glutamate + ATP = gamma-L-glutamyl-L-cysteine + ADP + phosphate + H(+). The protein operates within sulfur metabolism; glutathione biosynthesis; glutathione from L-cysteine and L-glutamate: step 1/2. This Alcanivorax borkumensis (strain ATCC 700651 / DSM 11573 / NCIMB 13689 / SK2) protein is Glutamate--cysteine ligase.